The following is a 534-amino-acid chain: Polyprotein pp62 (534 aa).

This sequence belongs to the asfivirus polyprotein pp62 family. In terms of assembly, monomer. Predominantly exists as a monomer, with very little dimers. Homodimerization seems to be linked to low pH. As to quaternary structure, homodimer; disulfide-linked. Homotrimer; disulfide-linked. Homohexamer. Post-translationally, monoubiquitinated in vitro by viral UBCv1. Specific enzymatic cleavages in vivo by the viral pS273R protease yield mature proteins.

It localises to the host cytoplasm. It is found in the host perinuclear region. The protein resides in the virion. Functionally, essential for the correct assembly and maturation of the core of the virion. Component of the core shell. Binds to phosphatidylserine, which may enable the core shell binding with the inner membrane. In terms of biological role, component of the core shell. Binds to phosphatidylserine and DNA, which may link the core shell to the inner membrane and to the viral nucleoid. Its function is as follows. Component of the core shell. This chain is Polyprotein pp62, found in Ornithodoros (relapsing fever ticks).